A 215-amino-acid chain; its full sequence is MNAPAPSSIRRTKKLPPLRVGIGGPVGSGKTTLLEMLCKAMRDRYDLVAITNDIYTKEDQRLLTVAGALPEERIMGVETGGCPHTAIREDASINLEAVDRMLARFPDADIVFIESGGDNLAATFSPELSDLTIYVIDVAGGEKIPRKGGPGITKSDLLVINKTDLAPLVGANLDVMASDTRKMRGERPYVMTNLKALDGVADVIAFIEKKGLLTV.

Gly-24–Thr-31 is a binding site for GTP.

It belongs to the SIMIBI class G3E GTPase family. UreG subfamily. Homodimer. UreD, UreF and UreG form a complex that acts as a GTP-hydrolysis-dependent molecular chaperone, activating the urease apoprotein by helping to assemble the nickel containing metallocenter of UreC. The UreE protein probably delivers the nickel.

It localises to the cytoplasm. Functionally, facilitates the functional incorporation of the urease nickel metallocenter. This process requires GTP hydrolysis, probably effectuated by UreG. In Burkholderia cenocepacia (strain HI2424), this protein is Urease accessory protein UreG.